Here is a 26-residue protein sequence, read N- to C-terminus: GTP-binding protein Rheb (26 aa).

Ser-1, Ser-2, Val-13, Tyr-16, and Thr-19 together coordinate GTP. Ser-1 lines the Mg(2+) pocket. Positions 16 to 24 match the Effector region motif; the sequence is YDPTIENTF. Thr-19 serves as a coordination point for Mg(2+).

The protein belongs to the small GTPase superfamily. Rheb family.

The enzyme catalyses GTP + H2O = GDP + phosphate + H(+). In terms of biological role, binds GTP and exhibits intrinsic GTPase activity. This Crocodylus siamensis (Siamese crocodile) protein is GTP-binding protein Rheb.